A 150-amino-acid polypeptide reads, in one-letter code: UPF0178 protein HCH_06960 (150 aa).

The protein belongs to the UPF0178 family.

The polypeptide is UPF0178 protein HCH_06960 (Hahella chejuensis (strain KCTC 2396)).